Here is a 1195-residue protein sequence, read N- to C-terminus: Zinc finger and BTB domain-containing protein 38 (1195 aa).

Residues Cys33–Arg100 enclose the BTB domain. Lys43 participates in a covalent cross-link: Glycyl lysine isopeptide (Lys-Gly) (interchain with G-Cter in SUMO2). The residue at position 130 (Ser130) is a Phosphoserine. Glycyl lysine isopeptide (Lys-Gly) (interchain with G-Cter in SUMO2) cross-links involve residues Lys145, Lys148, Lys151, and Lys259. The interval Arg264–Ala334 is disordered. Residues Ser270 to Glu280 are compositionally biased toward polar residues. Residues Pro300 to Glu523 form an interaction with CBFA2T3 region. Ser309 carries the phosphoserine modification. Over residues Gly314 to Glu323 the composition is skewed to basic and acidic residues. Residues Tyr342–His364 form a C2H2-type 1 zinc finger. The segment at Leu371–Arg395 adopts a C2H2-type 2; degenerate zinc-finger fold. 3 consecutive C2H2-type zinc fingers follow at residues Tyr460–His482, Tyr488–His510, and Tyr516–His539. Residues Lys550, Lys557, Lys754, Lys758, Lys763, Lys804, Lys814, Lys821, Lys842, Lys850, and Lys857 each participate in a glycyl lysine isopeptide (Lys-Gly) (interchain with G-Cter in SUMO2) cross-link. The segment at Ser745–Lys804 is disordered. Positions Leu753–Gly765 are enriched in basic and acidic residues. Disordered regions lie at residues Gln871–Leu891 and Phe903–Tyr922. Residues Lys923, Lys964, Lys969, Lys977, Lys981, Lys991, Lys1017, and Lys1026 each participate in a glycyl lysine isopeptide (Lys-Gly) (interchain with G-Cter in SUMO2) cross-link. 5 consecutive C2H2-type zinc fingers follow at residues Tyr1010–His1032, Tyr1038–His1060, Phe1066–His1088, Tyr1094–His1116, and Tyr1125–His1147. Glycyl lysine isopeptide (Lys-Gly) (interchain with G-Cter in SUMO2) cross-links involve residues Lys1109, Lys1132, Lys1135, Lys1150, and Lys1183.

In terms of assembly, interacts with CBFA2T3. Interacts with ZBTB4. Interacts with RBBP6. Ubiquitinated by RBBP6; leading to its degradation by the proteasome.

Its subcellular location is the nucleus. The protein localises to the chromosome. Transcriptional regulator with bimodal DNA-binding specificity. Binds with a higher affinity to methylated CpG dinucleotides in the consensus sequence 5'-CGCG-3' but can also bind to E-box elements (5'-CACGTG-3'). Can also bind specifically to a single methyl-CpG pair. Represses transcription in a methyl-CpG-dependent manner. Plays an important role in regulating DNA replication and common fragile sites (CFS) stability in a RBBP6- and MCM10-dependent manner; represses expression of MCM10 which plays an important role in DNA-replication. Acts as a transcriptional activator. May be involved in the differentiation and/or survival of late postmitotic neurons. The chain is Zinc finger and BTB domain-containing protein 38 from Homo sapiens (Human).